The sequence spans 556 residues: Mitochondrial distribution and morphology protein 34-2 (556 aa).

The region spanning Met1–Leu195 is the SMP-LTD domain. Disordered regions lie at residues Glu206–Gly239, Thr299–Pro423, and His440–Pro473. The segment covering Thr299–Ala333 has biased composition (polar residues). Over residues Ser334–Ser357 the composition is skewed to low complexity. The span at Arg362–Arg374 shows a compositional bias: basic residues. Residues Val375–Asp385 show a composition bias toward basic and acidic residues. Residues Ser391–Pro402 show a composition bias toward polar residues. The segment covering Glu459–Asp468 has biased composition (basic and acidic residues).

It belongs to the MDM34 family. Component of the ER-mitochondria encounter structure (ERMES) or MDM complex, composed of mmm1, mdm10, mdm12 and mdm34.

The protein resides in the mitochondrion outer membrane. Its function is as follows. Component of the ERMES/MDM complex, which serves as a molecular tether to connect the endoplasmic reticulum (ER) and mitochondria. Components of this complex are involved in the control of mitochondrial shape and protein biogenesis, and function in nonvesicular lipid trafficking between the ER and mitochondria. Mdm34 is required for the interaction of the ER-resident membrane protein mmm1 and the outer mitochondrial membrane-resident beta-barrel protein mdm10. The chain is Mitochondrial distribution and morphology protein 34-2 from Penicillium rubens (strain ATCC 28089 / DSM 1075 / NRRL 1951 / Wisconsin 54-1255) (Penicillium chrysogenum).